Consider the following 1206-residue polypeptide: DNA-directed RNA polymerase subunit beta' (1206 aa).

Residues Cys60, Cys62, Cys75, and Cys78 each coordinate Zn(2+). Residues Asp449, Asp451, and Asp453 each contribute to the Mg(2+) site. Zn(2+) contacts are provided by Cys818, Cys892, Cys899, and Cys902.

It belongs to the RNA polymerase beta' chain family. As to quaternary structure, the RNAP catalytic core consists of 2 alpha, 1 beta, 1 beta' and 1 omega subunit. When a sigma factor is associated with the core the holoenzyme is formed, which can initiate transcription. It depends on Mg(2+) as a cofactor. Requires Zn(2+) as cofactor.

The enzyme catalyses RNA(n) + a ribonucleoside 5'-triphosphate = RNA(n+1) + diphosphate. In terms of biological role, DNA-dependent RNA polymerase catalyzes the transcription of DNA into RNA using the four ribonucleoside triphosphates as substrates. This Halalkalibacterium halodurans (strain ATCC BAA-125 / DSM 18197 / FERM 7344 / JCM 9153 / C-125) (Bacillus halodurans) protein is DNA-directed RNA polymerase subunit beta'.